A 363-amino-acid chain; its full sequence is Jasmonate-induced oxygenase 3 (363 aa).

The Fe2OG dioxygenase domain occupies 210–312 (ESGGCLRVNY…RLSLAFFYNP (103 aa)). Arginine 216 is a binding site for jasmonate. 2-oxoglutarate-binding residues include asparagine 218 and tyrosine 220. Residues histidine 235, aspartate 237, and histidine 293 each coordinate Fe cation. 2-oxoglutarate contacts are provided by arginine 303 and serine 305. Jasmonate contacts are provided by arginine 342 and arginine 346.

It belongs to the iron/ascorbate-dependent oxidoreductase family. L-ascorbate is required as a cofactor. Requires Fe(2+) as cofactor.

It carries out the reaction jasmonate + 2-oxoglutarate + O2 = (1R,2R)-12-hydroxyjasmonate + succinate + CO2. In terms of biological role, 2-oxoglutarate-dependent dioxygenase involved in the oxidation of jasmonate (JA), a stress-induced phytohormone synthesized in response to attack by pathogens and herbivores, which triggers the activation of defense responses via the JA-mediated signaling pathway. Converts JA to 12-hydroxyjasmonate (12OH-JA), an inactive form of JA. Is specific to free JA, and cannot oxidize the bioactive form jasmonoyl-L-isoleucine (JA-Ile) or other JA-amino acid conjugates. Prevents over-accumulation of JA and indirectly its bioactive form JA-Ile under stress response. Acts as a negative regulator of JA-mediated defense signaling, by contributing to 12OH-JA accumulation, which represses JA defense responses upon infection by the fungal pathogen Botrytis cinerea. Acts as a negative regulator of JA-mediated defense responses upon infestation by the herbivorous caterpillar Mamestra brassicae. The sequence is that of Jasmonate-induced oxygenase 3 from Arabidopsis thaliana (Mouse-ear cress).